The primary structure comprises 289 residues: Phosphatidylserine decarboxylase proenzyme (289 aa).

Residues Asp88, His145, and Ser251 each act as charge relay system; for autoendoproteolytic cleavage activity in the active site. The active-site Schiff-base intermediate with substrate; via pyruvic acid; for decarboxylase activity is Ser251. A Pyruvic acid (Ser); by autocatalysis modification is found at Ser251.

Belongs to the phosphatidylserine decarboxylase family. PSD-B subfamily. Prokaryotic type I sub-subfamily. Heterodimer of a large membrane-associated beta subunit and a small pyruvoyl-containing alpha subunit. Requires pyruvate as cofactor. Is synthesized initially as an inactive proenzyme. Formation of the active enzyme involves a self-maturation process in which the active site pyruvoyl group is generated from an internal serine residue via an autocatalytic post-translational modification. Two non-identical subunits are generated from the proenzyme in this reaction, and the pyruvate is formed at the N-terminus of the alpha chain, which is derived from the carboxyl end of the proenzyme. The autoendoproteolytic cleavage occurs by a canonical serine protease mechanism, in which the side chain hydroxyl group of the serine supplies its oxygen atom to form the C-terminus of the beta chain, while the remainder of the serine residue undergoes an oxidative deamination to produce ammonia and the pyruvoyl prosthetic group on the alpha chain. During this reaction, the Ser that is part of the protease active site of the proenzyme becomes the pyruvoyl prosthetic group, which constitutes an essential element of the active site of the mature decarboxylase.

It is found in the cell membrane. It catalyses the reaction a 1,2-diacyl-sn-glycero-3-phospho-L-serine + H(+) = a 1,2-diacyl-sn-glycero-3-phosphoethanolamine + CO2. The protein operates within phospholipid metabolism; phosphatidylethanolamine biosynthesis; phosphatidylethanolamine from CDP-diacylglycerol: step 2/2. Catalyzes the formation of phosphatidylethanolamine (PtdEtn) from phosphatidylserine (PtdSer). In Polaromonas naphthalenivorans (strain CJ2), this protein is Phosphatidylserine decarboxylase proenzyme.